Reading from the N-terminus, the 245-residue chain is 5-oxoprolinase subunit A (245 aa).

The protein belongs to the LamB/PxpA family. In terms of assembly, forms a complex composed of PxpA, PxpB and PxpC.

It catalyses the reaction 5-oxo-L-proline + ATP + 2 H2O = L-glutamate + ADP + phosphate + H(+). Its function is as follows. Catalyzes the cleavage of 5-oxoproline to form L-glutamate coupled to the hydrolysis of ATP to ADP and inorganic phosphate. The protein is 5-oxoprolinase subunit A of Serratia proteamaculans (strain 568).